The chain runs to 299 residues: Oxygen-dependent coproporphyrinogen-III oxidase (299 aa).

S92 contributes to the substrate binding site. Mn(2+) contacts are provided by H96 and H106. H106 (proton donor) is an active-site residue. 108 to 110 (NVR) contributes to the substrate binding site. Mn(2+)-binding residues include H145 and H175. The tract at residues 240-275 (YVEFNLVWDRGTLFGLQTGGRTESILMSMPPLVRWE) is important for dimerization. 258 to 260 (GGR) serves as a coordination point for substrate.

Belongs to the aerobic coproporphyrinogen-III oxidase family. As to quaternary structure, homodimer. Mn(2+) is required as a cofactor.

The protein resides in the cytoplasm. The catalysed reaction is coproporphyrinogen III + O2 + 2 H(+) = protoporphyrinogen IX + 2 CO2 + 2 H2O. It functions in the pathway porphyrin-containing compound metabolism; protoporphyrin-IX biosynthesis; protoporphyrinogen-IX from coproporphyrinogen-III (O2 route): step 1/1. In terms of biological role, involved in the heme biosynthesis. Catalyzes the aerobic oxidative decarboxylation of propionate groups of rings A and B of coproporphyrinogen-III to yield the vinyl groups in protoporphyrinogen-IX. This is Oxygen-dependent coproporphyrinogen-III oxidase from Escherichia coli (strain K12 / MC4100 / BW2952).